A 166-amino-acid polypeptide reads, in one-letter code: Large ribosomal subunit protein uL10 (166 aa).

This sequence belongs to the universal ribosomal protein uL10 family. As to quaternary structure, part of the ribosomal stalk of the 50S ribosomal subunit. The N-terminus interacts with L11 and the large rRNA to form the base of the stalk. The C-terminus forms an elongated spine to which L12 dimers bind in a sequential fashion forming a multimeric L10(L12)X complex.

Its function is as follows. Forms part of the ribosomal stalk, playing a central role in the interaction of the ribosome with GTP-bound translation factors. The polypeptide is Large ribosomal subunit protein uL10 (Streptococcus pyogenes serotype M28 (strain MGAS6180)).